A 196-amino-acid polypeptide reads, in one-letter code: GTP cyclohydrolase-2 (196 aa).

A GTP-binding site is contributed by 49-53 (RVHSE). Zn(2+)-binding residues include cysteine 54, cysteine 65, and cysteine 67. Residues glutamine 70, 92 to 94 (EGR), and threonine 114 contribute to the GTP site. Residue aspartate 126 is the Proton acceptor of the active site. Catalysis depends on arginine 128, which acts as the Nucleophile. The GTP site is built by threonine 149 and lysine 154.

Belongs to the GTP cyclohydrolase II family. In terms of assembly, homodimer. It depends on Zn(2+) as a cofactor.

The enzyme catalyses GTP + 4 H2O = 2,5-diamino-6-hydroxy-4-(5-phosphoribosylamino)-pyrimidine + formate + 2 phosphate + 3 H(+). It participates in cofactor biosynthesis; riboflavin biosynthesis; 5-amino-6-(D-ribitylamino)uracil from GTP: step 1/4. Catalyzes the conversion of GTP to 2,5-diamino-6-ribosylamino-4(3H)-pyrimidinone 5'-phosphate (DARP), formate and pyrophosphate. This chain is GTP cyclohydrolase-2, found in Shigella boydii serotype 18 (strain CDC 3083-94 / BS512).